We begin with the raw amino-acid sequence, 340 residues long: Phosphate acyltransferase (340 aa).

This sequence belongs to the PlsX family. Homodimer. Probably interacts with PlsY.

The protein resides in the cytoplasm. The enzyme catalyses a fatty acyl-[ACP] + phosphate = an acyl phosphate + holo-[ACP]. The protein operates within lipid metabolism; phospholipid metabolism. Functionally, catalyzes the reversible formation of acyl-phosphate (acyl-PO(4)) from acyl-[acyl-carrier-protein] (acyl-ACP). This enzyme utilizes acyl-ACP as fatty acyl donor, but not acyl-CoA. This is Phosphate acyltransferase from Trichodesmium erythraeum (strain IMS101).